A 466-amino-acid chain; its full sequence is Alpha-1A adrenergic receptor (466 aa).

At 1-27 (MVLLSENASEGSNCTHPPAPVNISKAI) the chain is on the extracellular side. N-linked (GlcNAc...) asparagine glycans are attached at residues asparagine 7, asparagine 13, and asparagine 22. A helical membrane pass occupies residues 28–51 (LLGVILGGLIIFGVLGNILVILSV). At 52-64 (ACHRHLHSVTHYY) the chain is on the cytoplasmic side. A helical membrane pass occupies residues 65–88 (IVNLAVADLLLTSTVLPFSAIFEI). The Extracellular segment spans residues 89–99 (LGYWAFGRVFC). An intrachain disulfide couples cysteine 99 to cysteine 176. Residues 100 to 122 (NIWAAVDVLCCTASIMGLCIISI) form a helical membrane-spanning segment. The Cytoplasmic segment spans residues 123–143 (DRYIGVSYPLRYPTIVTQRRG). A helical transmembrane segment spans residues 144–167 (VRALLCVWVLSLVISIGPLFGWRQ). At 168 to 181 (PAPEDETICQINEE) the chain is on the extracellular side. A helical transmembrane segment spans residues 182-205 (PGYVLFSALGSFYVPLAIILVMYC). At 206-273 (RVYVVAKRES…FSREKKAAKT (68 aa)) the chain is on the cytoplasmic side. Serine 215 carries the post-translational modification Phosphoserine; by PKA. The chain crosses the membrane as a helical span at residues 274 to 297 (LGIVVGCFVLCWLPFFLVMPIGSF). Residues 298–305 (FPDFKPSE) lie on the Extracellular side of the membrane. The helical transmembrane segment at 306–329 (TVFKIVFWLGYLNSCINPIIYPCS) threads the bilayer. Residues 330–466 (SQEFKKAFQN…ISLGENGEEV (137 aa)) are Cytoplasmic-facing. Positions 334–349 (KKAFQNVLRIQCLRRR) match the Nuclear localization signal motif. Cysteine 345 carries S-palmitoyl cysteine lipidation.

Belongs to the G-protein coupled receptor 1 family. Adrenergic receptor subfamily. ADRA1A sub-subfamily. As to quaternary structure, homo- and heterooligomer. Heterooligomerizes with ADRA1B homooligomers in cardiac myocytes. Interacts with CAVIN4. Post-translationally, C-terminal Ser or Thr residues may be phosphorylated. In terms of tissue distribution, abundant in heart, brain, aorta, vena cava, vas deferens, submaxillary gland, lung, and kidney. Found at lower levels in prostate, parotid gland and skeletal muscle.

It is found in the nucleus membrane. The protein resides in the cell membrane. The protein localises to the cytoplasm. It localises to the membrane. Its subcellular location is the caveola. In terms of biological role, this alpha-adrenergic receptor mediates its action by association with G proteins that activate a phosphatidylinositol-calcium second messenger system. Its effect is mediated by G(q) and G(11) proteins. Nuclear ADRA1A-ADRA1B heterooligomers regulate phenylephrine (PE)-stimulated ERK signaling in cardiac myocytes. The chain is Alpha-1A adrenergic receptor (Adra1a) from Rattus norvegicus (Rat).